The primary structure comprises 97 residues: Co-chaperonin GroES (97 aa).

It belongs to the GroES chaperonin family. Heptamer of 7 subunits arranged in a ring. Interacts with the chaperonin GroEL.

The protein resides in the cytoplasm. Functionally, together with the chaperonin GroEL, plays an essential role in assisting protein folding. The GroEL-GroES system forms a nano-cage that allows encapsulation of the non-native substrate proteins and provides a physical environment optimized to promote and accelerate protein folding. GroES binds to the apical surface of the GroEL ring, thereby capping the opening of the GroEL channel. The polypeptide is Co-chaperonin GroES (Gemmatimonas aurantiaca (strain DSM 14586 / JCM 11422 / NBRC 100505 / T-27)).